The primary structure comprises 219 residues: Poxin (219 aa).

Catalysis depends on H17, which acts as the Proton donor. Residue Y138 is the Shared with catalytic histidine of dimeric partner of the active site. Catalysis depends on K142, which acts as the Proton acceptor; shared with catalytic histidine of dimeric partner.

This sequence belongs to the poxin family. In terms of assembly, homodimer.

It catalyses the reaction 2',3'-cGAMP + H2O = Gp(2'-5')Ap(3') + H(+). In terms of biological role, nuclease that is responsible for viral evasion of host cGAS-STING innate immunity. Cleaves 2',3'-cGAMP which is produced by host cGAS following recognition of cytosolic DNA and blocks the subsequent 2',3'-cGAMP-mediated activation of TMEM173/STING, which normally spreads to adjacent cells and activates the interferon and NF-kappa-B immune responses. This is Poxin (OPG188) from Homo sapiens (Human).